We begin with the raw amino-acid sequence, 128 residues long: Aspartate 1-decarboxylase (128 aa).

The Schiff-base intermediate with substrate; via pyruvic acid role is filled by Ser-25. Ser-25 carries the pyruvic acid (Ser) modification. Thr-57 provides a ligand contact to substrate. Tyr-58 functions as the Proton donor in the catalytic mechanism. Residue Gly-73 to Ala-75 coordinates substrate.

It belongs to the PanD family. Heterooctamer of four alpha and four beta subunits. The cofactor is pyruvate. Post-translationally, is synthesized initially as an inactive proenzyme, which is activated by self-cleavage at a specific serine bond to produce a beta-subunit with a hydroxyl group at its C-terminus and an alpha-subunit with a pyruvoyl group at its N-terminus.

The protein resides in the cytoplasm. The catalysed reaction is L-aspartate + H(+) = beta-alanine + CO2. It functions in the pathway cofactor biosynthesis; (R)-pantothenate biosynthesis; beta-alanine from L-aspartate: step 1/1. Its function is as follows. Catalyzes the pyruvoyl-dependent decarboxylation of aspartate to produce beta-alanine. This chain is Aspartate 1-decarboxylase, found in Burkholderia vietnamiensis (strain G4 / LMG 22486) (Burkholderia cepacia (strain R1808)).